The following is a 183-amino-acid chain: Photosystem I assembly protein Ycf4 (183 aa).

The next 2 helical transmembrane spans lie at Y21–L43 and F58–W80.

It belongs to the Ycf4 family.

It localises to the plastid. Its subcellular location is the chloroplast thylakoid membrane. In terms of biological role, seems to be required for the assembly of the photosystem I complex. The polypeptide is Photosystem I assembly protein Ycf4 (Nephroselmis olivacea (Green alga)).